The chain runs to 81 residues: MKTLLLTLVVVTIVCLDLGYTMTCCNQQSSQPKTTTPCAESSCYKKTWKDHRGTIIERGCGCPNVKPGIDLMCCRTDECNN.

Residues 1 to 21 form the signal peptide; the sequence is MKTLLLTLVVVTIVCLDLGYT. 4 disulfide bridges follow: cysteine 24–cysteine 43, cysteine 38–cysteine 60, cysteine 62–cysteine 73, and cysteine 74–cysteine 79.

Belongs to the three-finger toxin family. Short-chain subfamily. Type I alpha-neurotoxin sub-subfamily. As to expression, expressed by the venom gland.

The protein resides in the secreted. Its function is as follows. Binds to muscle nicotinic acetylcholine receptor (nAChR) and inhibit acetylcholine from binding to the receptor, thereby impairing neuromuscular transmission. In Tropidechis carinatus (Australian rough-scaled snake), this protein is Short neurotoxin 2.